The chain runs to 175 residues: Crossover junction endodeoxyribonuclease RuvC (175 aa).

Catalysis depends on residues D8, E69, and D141. Mg(2+) contacts are provided by D8, E69, and D141.

It belongs to the RuvC family. Homodimer which binds Holliday junction (HJ) DNA. The HJ becomes 2-fold symmetrical on binding to RuvC with unstacked arms; it has a different conformation from HJ DNA in complex with RuvA. In the full resolvosome a probable DNA-RuvA(4)-RuvB(12)-RuvC(2) complex forms which resolves the HJ. Mg(2+) serves as cofactor.

The protein localises to the cytoplasm. It carries out the reaction Endonucleolytic cleavage at a junction such as a reciprocal single-stranded crossover between two homologous DNA duplexes (Holliday junction).. Functionally, the RuvA-RuvB-RuvC complex processes Holliday junction (HJ) DNA during genetic recombination and DNA repair. Endonuclease that resolves HJ intermediates. Cleaves cruciform DNA by making single-stranded nicks across the HJ at symmetrical positions within the homologous arms, yielding a 5'-phosphate and a 3'-hydroxyl group; requires a central core of homology in the junction. The consensus cleavage sequence is 5'-(A/T)TT(C/G)-3'. Cleavage occurs on the 3'-side of the TT dinucleotide at the point of strand exchange. HJ branch migration catalyzed by RuvA-RuvB allows RuvC to scan DNA until it finds its consensus sequence, where it cleaves and resolves the cruciform DNA. This chain is Crossover junction endodeoxyribonuclease RuvC, found in Colwellia psychrerythraea (strain 34H / ATCC BAA-681) (Vibrio psychroerythus).